A 509-amino-acid polypeptide reads, in one-letter code: ATP synthase subunit alpha (509 aa).

169 to 176 provides a ligand contact to ATP; that stretch reads GDRQTGKT.

It belongs to the ATPase alpha/beta chains family. As to quaternary structure, F-type ATPases have 2 components, CF(1) - the catalytic core - and CF(0) - the membrane proton channel. CF(1) has five subunits: alpha(3), beta(3), gamma(1), delta(1), epsilon(1). CF(0) has three main subunits: a(1), b(2) and c(9-12). The alpha and beta chains form an alternating ring which encloses part of the gamma chain. CF(1) is attached to CF(0) by a central stalk formed by the gamma and epsilon chains, while a peripheral stalk is formed by the delta and b chains.

The protein localises to the cell inner membrane. The catalysed reaction is ATP + H2O + 4 H(+)(in) = ADP + phosphate + 5 H(+)(out). In terms of biological role, produces ATP from ADP in the presence of a proton gradient across the membrane. The alpha chain is a regulatory subunit. The polypeptide is ATP synthase subunit alpha (Rhizobium johnstonii (strain DSM 114642 / LMG 32736 / 3841) (Rhizobium leguminosarum bv. viciae)).